The primary structure comprises 420 residues: Tol-Pal system protein TolB (420 aa).

Positions 1–21 (MKLFVHLVLFISLFIPYFTKA) are cleaved as a signal peptide.

This sequence belongs to the TolB family. The Tol-Pal system is composed of five core proteins: the inner membrane proteins TolA, TolQ and TolR, the periplasmic protein TolB and the outer membrane protein Pal. They form a network linking the inner and outer membranes and the peptidoglycan layer.

It is found in the periplasm. In terms of biological role, part of the Tol-Pal system, which plays a role in outer membrane invagination during cell division and is important for maintaining outer membrane integrity. This chain is Tol-Pal system protein TolB, found in Wolbachia pipientis wMel.